We begin with the raw amino-acid sequence, 373 residues long: Centrosomal protein of 41 kDa (373 aa).

The disordered stretch occupies residues 91–137 (LEDNDSATSEADAEIAAKTNGKGSPEEQSPSPVQFINSTGAGDSSRS). Residues serine 96 and serine 99 each carry the phosphoserine modification. Threonine 109 carries the phosphothreonine modification. A phosphoserine mark is found at serine 114 and serine 121. The span at 116–137 (EEQSPSPVQFINSTGAGDSSRS) shows a compositional bias: polar residues. The region spanning 169 to 266 (PDCPFLLLDV…LAQKFPEGLV (98 aa)) is the Rhodanese domain. The disordered stretch occupies residues 317 to 373 (DQGPADNPSRLNQNNSAGKDSKVAACRGGQNLPTSCPASHSSPRTLTSGHLQGKPWK). The segment covering 325-334 (SRLNQNNSAG) has biased composition (polar residues). Arginine 343 carries the omega-N-methylarginine modification. Over residues 347–366 (NLPTSCPASHSSPRTLTSGH) the composition is skewed to polar residues.

Belongs to the CEP41 family. As to quaternary structure, found in a complex with TTLL6.

The protein resides in the cytoplasm. Its subcellular location is the cytoskeleton. It is found in the microtubule organizing center. The protein localises to the centrosome. It localises to the cell projection. The protein resides in the cilium. Its subcellular location is the cilium basal body. In terms of biological role, required during ciliogenesis for tubulin glutamylation in cilium. Probably acts by participating in the transport of TTLL6, a tubulin polyglutamylase, between the basal body and the cilium. The sequence is that of Centrosomal protein of 41 kDa (Cep41) from Mus musculus (Mouse).